We begin with the raw amino-acid sequence, 362 residues long: Aminomethyltransferase (362 aa).

It belongs to the GcvT family. The glycine cleavage system is composed of four proteins: P, T, L and H.

The enzyme catalyses N(6)-[(R)-S(8)-aminomethyldihydrolipoyl]-L-lysyl-[protein] + (6S)-5,6,7,8-tetrahydrofolate = N(6)-[(R)-dihydrolipoyl]-L-lysyl-[protein] + (6R)-5,10-methylene-5,6,7,8-tetrahydrofolate + NH4(+). Its function is as follows. The glycine cleavage system catalyzes the degradation of glycine. This is Aminomethyltransferase from Porphyromonas gingivalis (strain ATCC 33277 / DSM 20709 / CIP 103683 / JCM 12257 / NCTC 11834 / 2561).